The sequence spans 1439 residues: Microtubule organization protein AKNA (1439 aa).

2 stretches are compositionally biased toward basic and acidic residues: residues Met-1 to Trp-10 and Ala-25 to Arg-35. Residues Met-1–Pro-394 form a disordered region. Ser-52 is modified (phosphoserine). Positions Trp-71–Ser-83 are enriched in basic and acidic residues. The span at Ser-89 to Asp-99 shows a compositional bias: acidic residues. A compositionally biased stretch (polar residues) spans Gln-263–His-275. Residues Ala-276–Thr-285 are compositionally biased toward basic and acidic residues. Residues Ser-316, Ser-499, and Ser-534 each carry the phosphoserine modification. Disordered stretches follow at residues Ser-507–Gln-562 and Ile-659–Pro-682. The span at Leu-533–Leu-544 shows a compositional bias: low complexity. 2 positions are modified to phosphoserine: Ser-767 and Ser-770. Positions Leu-771–Thr-804 are PEST. Disordered regions lie at residues Met-775–Glu-942 and Ile-977–Arg-1005. The span at Glu-778–Gly-792 shows a compositional bias: acidic residues. Ser-848 is subject to Phosphoserine. Positions Pro-865–Pro-875 are enriched in pro residues. 3 stretches are compositionally biased toward polar residues: residues Ser-879 to Glu-891, Ser-929 to Thr-940, and Glu-983 to Ser-999. Phosphoserine is present on Ser-886. A PEST region spans residues His-911 to Ser-932. Residues Ser-997 and Ser-1010 each carry the phosphoserine modification. A disordered region spans residues Leu-1095–Glu-1165. The a.T hook DNA-binding region spans Arg-1115–Ser-1123. Residues Ser-1135 to Glu-1147 are compositionally biased toward basic and acidic residues. A phosphoserine mark is found at Ser-1172 and Ser-1173. The interval Leu-1180 to Asp-1211 is disordered. At Ser-1228 the chain carries Phosphoserine. Residues Ala-1252–Ala-1329 are disordered. The span at Ser-1303–Ser-1317 shows a compositional bias: polar residues. Ser-1377, Ser-1387, and Ser-1424 each carry phosphoserine.

It belongs to the AKNA family. In terms of assembly, interacts with DCTN1. Interacts with MAPRE1/EB1. Interacts with ODF2. Interacts with CAMSAP3. Post-translationally, phosphorylated; phosphorylation regulates dissociation from and reassembly at the centrosome. As to expression, predominantly expressed by lymphoid tissues. Highly expressed in the spleen, lymph nodes and peripheral blood leukocytes, expressed at lower level in the thymus. Mainly expressed by germinal center B-lymphocytes, a stage in which receptor and ligand interactions are crucial for B-lymphocyte maturation. Expressed by B- and T-lymphocytes, Natural killer cells and CD1a(+)CD14(-) but not CD1a(-)CD14(+) dendritic cells. Weakly or not expressed in fetal liver and in adult bone marrow.

It localises to the cytoplasm. The protein localises to the cytoskeleton. It is found in the microtubule organizing center. The protein resides in the centrosome. Its subcellular location is the centriole. It localises to the nucleus. Centrosomal protein that plays a key role in cell delamination by regulating microtubule organization. Required for the delamination and retention of neural stem cells from the subventricular zone during neurogenesis. Also regulates the epithelial-to-mesenchymal transition in other epithelial cells. Acts by increasing centrosomal microtubule nucleation and recruiting nucleation factors and minus-end stabilizers, thereby destabilizing microtubules at the adherens junctions and mediating constriction of the apical endfoot. In addition, may also act as a transcription factor that specifically activates the expression of the CD40 receptor and its ligand CD40L/CD154, two cell surface molecules on lymphocytes that are critical for antigen-dependent-B-cell development. Binds to A/T-rich promoters. It is unclear how it can both act as a microtubule organizer and as a transcription factor; additional evidences are required to reconcile these two apparently contradictory functions. This Homo sapiens (Human) protein is Microtubule organization protein AKNA.